A 242-amino-acid chain; its full sequence is Probable pectate lyase D (242 aa).

An N-terminal signal peptide occupies residues 1–17; the sequence is MYQKSLLFSLLASSALA. N216 carries N-linked (GlcNAc...) asparagine glycosylation. A disordered region spans residues 217 to 242; the sequence is DTGAEPEEISEGPSDACQYSEPLSSC.

Belongs to the polysaccharide lyase 3 family. It depends on Ca(2+) as a cofactor.

It localises to the secreted. The enzyme catalyses Eliminative cleavage of (1-&gt;4)-alpha-D-galacturonan to give oligosaccharides with 4-deoxy-alpha-D-galact-4-enuronosyl groups at their non-reducing ends.. Functionally, pectinolytic enzyme consist of four classes of enzymes: pectin lyase, polygalacturonase, pectin methylesterase and rhamnogalacturonase. Among pectinolytic enzymes, pectin lyase is the most important in depolymerization of pectin, since it cleaves internal glycosidic bonds of highly methylated pectins. Favors pectate, the anion, over pectin, the methyl ester. The protein is Probable pectate lyase D (plyD) of Aspergillus fumigatus (strain CBS 144.89 / FGSC A1163 / CEA10) (Neosartorya fumigata).